The primary structure comprises 253 residues: Phosphate import ATP-binding protein PstB 1 (253 aa).

An ABC transporter domain is found at 7–248 (LTVSDLSLYY…PEKQETSDYI (242 aa)). 39–46 (GPSGCGKS) lines the ATP pocket.

It belongs to the ABC transporter superfamily. Phosphate importer (TC 3.A.1.7) family. As to quaternary structure, the complex is composed of two ATP-binding proteins (PstB), two transmembrane proteins (PstC and PstA) and a solute-binding protein (PstS).

It is found in the cell membrane. The enzyme catalyses phosphate(out) + ATP + H2O = ADP + 2 phosphate(in) + H(+). In terms of biological role, part of the ABC transporter complex PstSACB involved in phosphate import. Responsible for energy coupling to the transport system. This Lactococcus lactis subsp. lactis (strain IL1403) (Streptococcus lactis) protein is Phosphate import ATP-binding protein PstB 1.